A 254-amino-acid polypeptide reads, in one-letter code: D-aminoacyl-tRNA deacylase (254 aa).

It belongs to the DtdA deacylase family. In terms of assembly, monomer. Zn(2+) is required as a cofactor.

The catalysed reaction is a D-aminoacyl-tRNA + H2O = a tRNA + a D-alpha-amino acid + H(+). The enzyme catalyses glycyl-tRNA(Ala) + H2O = tRNA(Ala) + glycine + H(+). In terms of biological role, D-aminoacyl-tRNA deacylase with broad substrate specificity. By recycling D-aminoacyl-tRNA to D-amino acids and free tRNA molecules, this enzyme counteracts the toxicity associated with the formation of D-aminoacyl-tRNA entities in vivo. This is D-aminoacyl-tRNA deacylase from Methanococcus vannielii (strain ATCC 35089 / DSM 1224 / JCM 13029 / OCM 148 / SB).